The primary structure comprises 544 residues: Chromatin assembly factor 1 subunit A (544 aa).

A compositionally biased stretch (polar residues) spans 1–22 (MNSESVDSDVAASTSNKGNELC). 3 disordered regions span residues 1–52 (MNSE…EADE), 67–117 (IYNG…REQE), and 138–160 (QEQQ…AQRL). Positions 23-35 (SSSTDITSLSVSS) are enriched in low complexity. Residues 36-47 (PNESVIHSSHSA) show a composition bias toward polar residues. Positions 56–170 (KLSYEGNRKK…RQEQILNKER (115 aa)) are interaction with DNA and pcn1/PCNA. The segment covering 74–117 (AGKEKKLQKQRAQEERIRQKEAERLKREKERQQREQEKKLREQE) has biased composition (basic and acidic residues). Residues 76–176 (KEKKLQKQRA…NKERQQLKLN (101 aa)) adopt a coiled-coil conformation. The PCNA-interaction protein (PIP box) motif lies at 172–179 (QLKLNNFF). The segment at 325-396 (SNVLLNPWLE…DKDSVNASNT (72 aa)) is interaction with histones H3/H4. A compositionally biased stretch (acidic residues) spans 351–388 (DEEDDGEDLESEDEEVDNSDDIVEDGDNAFVDDEDDDK). The interval 351-400 (DEEDDGEDLESEDEEVDNSDDIVEDGDNAFVDDEDDDKDSVNASNTHRSS) is disordered.

It belongs to the RLF2 family. In terms of assembly, component of chromatin assembly factor 1 (CAF-1), composed of pcf1, pcf2 and pcf3. Interacts (via PIP motif) with pcn1/PCNA; the interaction is direct and occurs during S-phase. Interacts with swi6 at the G1/S-phase transition and early S-phase, but not in the G2 phase. The CAF-1 complex interacts with histone H3/H4 dimers.

The protein resides in the nucleus. Its function is as follows. Acts as a component of the histone chaperone complex chromatin assembly factor 1 (CAF-1), which assembles histone octamers onto DNA during replication and repair. CAF-1 performs the first step of the nucleosome assembly process, bringing newly synthesized histones H3 and H4 to replicating DNA; histones H2A/H2B can bind to this chromatin precursor subsequent to DNA replication to complete the histone octamer. Plays a role in the maintenance of heterochromatin. This is Chromatin assembly factor 1 subunit A from Schizosaccharomyces pombe (strain 972 / ATCC 24843) (Fission yeast).